The sequence spans 605 residues: Isocitrate dehydrogenase kinase/phosphatase (605 aa).

Residues 327-333 (APGIKGL) and K348 contribute to the ATP site. Residue D383 is part of the active site.

Belongs to the AceK family.

It localises to the cytoplasm. It catalyses the reaction L-seryl-[isocitrate dehydrogenase] + ATP = O-phospho-L-seryl-[isocitrate dehydrogenase] + ADP + H(+). Functionally, bifunctional enzyme which can phosphorylate or dephosphorylate isocitrate dehydrogenase (IDH) on a specific serine residue. This is a regulatory mechanism which enables bacteria to bypass the Krebs cycle via the glyoxylate shunt in response to the source of carbon. When bacteria are grown on glucose, IDH is fully active and unphosphorylated, but when grown on acetate or ethanol, the activity of IDH declines drastically concomitant with its phosphorylation. The chain is Isocitrate dehydrogenase kinase/phosphatase from Burkholderia multivorans (strain ATCC 17616 / 249).